We begin with the raw amino-acid sequence, 255 residues long: Triosephosphate isomerase (255 aa).

9–11 serves as a coordination point for substrate; the sequence is NWK. Catalysis depends on His-95, which acts as the Electrophile. Glu-167 (proton acceptor) is an active-site residue. Residues Gly-173, Ser-212, and 233-234 contribute to the substrate site; that span reads GG.

It belongs to the triosephosphate isomerase family. As to quaternary structure, homodimer.

It localises to the cytoplasm. It catalyses the reaction D-glyceraldehyde 3-phosphate = dihydroxyacetone phosphate. The protein operates within carbohydrate biosynthesis; gluconeogenesis. Its pathway is carbohydrate degradation; glycolysis; D-glyceraldehyde 3-phosphate from glycerone phosphate: step 1/1. Involved in the gluconeogenesis. Catalyzes stereospecifically the conversion of dihydroxyacetone phosphate (DHAP) to D-glyceraldehyde-3-phosphate (G3P). The polypeptide is Triosephosphate isomerase (Serratia proteamaculans (strain 568)).